The sequence spans 698 residues: Polyribonucleotide nucleotidyltransferase (698 aa).

Mg(2+) contacts are provided by aspartate 490 and aspartate 496. Residues 557 to 616 enclose the KH domain; it reads PKVVTMTIKPDKIRDVIGPGGKKINEIIDETGVKLDIEQDGTIFIGAVDQAMINRAREII. The S1 motif domain maps to 626–694; the sequence is GQTYQATVKR…KQGRVNASHR (69 aa).

It belongs to the polyribonucleotide nucleotidyltransferase family. Mg(2+) serves as cofactor.

It localises to the cytoplasm. It catalyses the reaction RNA(n+1) + phosphate = RNA(n) + a ribonucleoside 5'-diphosphate. Its function is as follows. Involved in mRNA degradation. Catalyzes the phosphorolysis of single-stranded polyribonucleotides processively in the 3'- to 5'-direction. In Staphylococcus aureus (strain Mu3 / ATCC 700698), this protein is Polyribonucleotide nucleotidyltransferase.